The sequence spans 178 residues: MKQLLDFLPLIVFFVVYKLHDIFWATAALIVATALAVIYSWYKYRKVEKMTLVTFVLVAVFGGLTIYFHNAEFIKWKVTIIYALFAGALLIGQWVMKKPLIQSMLGKEITLPAHAWSRLNIAWALFFIFCGLLNIYVAFWLPEAVWMNFKVFGIPGLTLVFTLLSGVYIYRHMPQEEK.

5 consecutive transmembrane segments (helical) span residues 22–42, 50–70, 76–96, 121–141, and 149–169; these read IFWA…YSWY, MTLV…YFHN, WKVT…QWVM, IAWA…AFWL, and FKVF…GVYI.

Belongs to the YciB family.

The protein resides in the cell inner membrane. Functionally, plays a role in cell envelope biogenesis, maintenance of cell envelope integrity and membrane homeostasis. This chain is Inner membrane-spanning protein YciB, found in Cronobacter sakazakii (strain ATCC BAA-894) (Enterobacter sakazakii).